A 229-amino-acid chain; its full sequence is Non-structural protein P8 (229 aa).

The next 2 membrane-spanning stretches (helical) occupy residues 119–139 (IIHMTLLIAAVVALLTSVCTL) and 162–182 (SLNPMLGVVNLGATFLMMVCA).

The protein belongs to the orbivirus NS3 family. As to quaternary structure, forms homooligomers via coiled-coil motif. Interacts with host OPTN; this interaction inhibits innate immune response.

The protein resides in the host cell membrane. It localises to the host Golgi apparatus. Its function is as follows. Plays a role in the inhibition of host innate immune response. Interacts with host OPTN and thus inhibits the recruitment of TBK1 to the host Golgi apparatus. In turn, downstream partner IRF3 cannot be activated and IFN-beta production is impaired. Facilitates viral particle release either by increasing plasma membrane permeability through a viroporin-like activity or by viral budding. This Antilocapra americana (Pronghorn) protein is Non-structural protein P8 (Segment-10).